Reading from the N-terminus, the 243-residue chain is DNA repair protein RecO (243 aa).

This sequence belongs to the RecO family.

In terms of biological role, involved in DNA repair and RecF pathway recombination. The chain is DNA repair protein RecO from Phenylobacterium zucineum (strain HLK1).